Reading from the N-terminus, the 157-residue chain is MRIGIGIDVHPFAEGRKLVIGGVHIPGHNGLDGHSDADVLLHAVSDALLGAAALGDIGLHFPNTSQEFKDIDSMILLKQVRKLLEKHGYQTVNIDAMLLLEEPKIAPYITGMRKNIARCLDIEIGMVSVKATTNEKLGYIGREEGAAAHAVCIIRSL.

A divalent metal cation is bound by residues Asp8 and His10. 4-CDP-2-C-methyl-D-erythritol 2-phosphate-binding positions include 8 to 10 (DVH) and 34 to 35 (HS). His42 serves as a coordination point for a divalent metal cation. 4-CDP-2-C-methyl-D-erythritol 2-phosphate is bound by residues 56 to 58 (DIG), 132 to 135 (TTNE), and Arg142.

Belongs to the IspF family. Homotrimer. Requires a divalent metal cation as cofactor.

The catalysed reaction is 4-CDP-2-C-methyl-D-erythritol 2-phosphate = 2-C-methyl-D-erythritol 2,4-cyclic diphosphate + CMP. It functions in the pathway isoprenoid biosynthesis; isopentenyl diphosphate biosynthesis via DXP pathway; isopentenyl diphosphate from 1-deoxy-D-xylulose 5-phosphate: step 4/6. Its function is as follows. Involved in the biosynthesis of isopentenyl diphosphate (IPP) and dimethylallyl diphosphate (DMAPP), two major building blocks of isoprenoid compounds. Catalyzes the conversion of 4-diphosphocytidyl-2-C-methyl-D-erythritol 2-phosphate (CDP-ME2P) to 2-C-methyl-D-erythritol 2,4-cyclodiphosphate (ME-CPP) with a corresponding release of cytidine 5-monophosphate (CMP). This Pelodictyon phaeoclathratiforme (strain DSM 5477 / BU-1) protein is 2-C-methyl-D-erythritol 2,4-cyclodiphosphate synthase.